Consider the following 551-residue polypeptide: Calnexin (551 aa).

Residues 1-23 form the signal peptide; sequence MRPQNVAGVAGTGALIMAAGALA. Residues 24 to 477 lie on the Lumenal side of the membrane; sequence DQTVFHPTSL…QAIKQMPEVA (454 aa). Residues 293–315 form a disordered region; sequence EEEPETIPDPEAEKPEEWDDEED. A helical transmembrane segment spans residues 478–498; the sequence is AGLAAAVFTLLGMLLALFGFI. The Cytoplasmic segment spans residues 499–551; the sequence is GSAPTKVKQTTVKTKAVAPVAPAGEEEKKALDQAGVEIPAEGSKKRVTRSTKE. The disordered stretch occupies residues 526–551; it reads KKALDQAGVEIPAEGSKKRVTRSTKE.

It belongs to the calreticulin family.

It is found in the endoplasmic reticulum membrane. Endoplasmic reticulum (ER) chaperone that functions to stabilize non-native glycoproteins and retain them in the ER until they are properly folded or targeted for ER associated degradation (ERAD). With co-chaperone DNJ1, coordinately maintains ER homeostasis and contributes to maintenance of cell wall architecture. This chain is Calnexin, found in Cryptococcus neoformans var. grubii serotype A (strain H99 / ATCC 208821 / CBS 10515 / FGSC 9487) (Filobasidiella neoformans var. grubii).